Here is a 173-residue protein sequence, read N- to C-terminus: Protein-export protein SecB (173 aa).

Belongs to the SecB family. In terms of assembly, homotetramer, a dimer of dimers. One homotetramer interacts with 1 SecA dimer.

It is found in the cytoplasm. Functionally, one of the proteins required for the normal export of preproteins out of the cell cytoplasm. It is a molecular chaperone that binds to a subset of precursor proteins, maintaining them in a translocation-competent state. It also specifically binds to its receptor SecA. In Novosphingobium aromaticivorans (strain ATCC 700278 / DSM 12444 / CCUG 56034 / CIP 105152 / NBRC 16084 / F199), this protein is Protein-export protein SecB.